The following is a 126-amino-acid chain: Holo-[acyl-carrier-protein] synthase (126 aa).

2 residues coordinate Mg(2+): D9 and E58.

This sequence belongs to the P-Pant transferase superfamily. AcpS family. The cofactor is Mg(2+).

It is found in the cytoplasm. The catalysed reaction is apo-[ACP] + CoA = holo-[ACP] + adenosine 3',5'-bisphosphate + H(+). Its function is as follows. Transfers the 4'-phosphopantetheine moiety from coenzyme A to a Ser of acyl-carrier-protein. The polypeptide is Holo-[acyl-carrier-protein] synthase (Yersinia pseudotuberculosis serotype I (strain IP32953)).